A 267-amino-acid polypeptide reads, in one-letter code: Small ribosomal subunit protein uS3 (267 aa).

The KH type-2 domain occupies 38 to 106 (IRKLLATGME…QVQLNILEVK (69 aa)). Positions 215 to 267 (TAASAPAGDRDRPRRERPSRPRRSGSTGTTATSTEAGRAATAVVEAPAENQEG) are disordered. The span at 222–233 (GDRDRPRRERPS) shows a compositional bias: basic and acidic residues. Residues 238-256 (SGSTGTTATSTEAGRAATA) show a composition bias toward low complexity.

The protein belongs to the universal ribosomal protein uS3 family. Part of the 30S ribosomal subunit. Forms a tight complex with proteins S10 and S14.

In terms of biological role, binds the lower part of the 30S subunit head. Binds mRNA in the 70S ribosome, positioning it for translation. In Nocardia farcinica (strain IFM 10152), this protein is Small ribosomal subunit protein uS3.